A 215-amino-acid polypeptide reads, in one-letter code: Probable phosphoglycerate mutase GpmB (215 aa).

Residues 8 to 15, 21 to 22, Arg-58, Arg-60, 82 to 85, 104 to 105, and 151 to 152 each bind substrate; these read RHGETQWN, QG, ELNM, RR, and GI. His-9 functions as the Tele-phosphohistidine intermediate in the catalytic mechanism. Glu-82 acts as the Proton donor/acceptor in catalysis.

This sequence belongs to the phosphoglycerate mutase family. GpmB subfamily.

It carries out the reaction (2R)-2-phosphoglycerate = (2R)-3-phosphoglycerate. It participates in carbohydrate degradation; glycolysis; pyruvate from D-glyceraldehyde 3-phosphate: step 3/5. This is Probable phosphoglycerate mutase GpmB from Escherichia coli O9:H4 (strain HS).